An 86-amino-acid chain; its full sequence is UPF0335 protein BR1752/BS1330_I1746 (86 aa).

The protein belongs to the UPF0335 family.

This Brucella suis biovar 1 (strain 1330) protein is UPF0335 protein BR1752/BS1330_I1746.